A 348-amino-acid polypeptide reads, in one-letter code: Phospho-N-acetylmuramoyl-pentapeptide-transferase (348 aa).

10 helical membrane passes run Ser-11–Gly-31, Ala-68–Gly-88, Thr-92–Ile-112, Phe-128–Gly-148, Val-165–Gly-185, Leu-196–Leu-216, Pro-222–Leu-242, Val-251–Met-271, Leu-276–Val-296, and Val-326–Leu-346.

It belongs to the glycosyltransferase 4 family. MraY subfamily. Mg(2+) serves as cofactor.

It is found in the cell inner membrane. It catalyses the reaction UDP-N-acetyl-alpha-D-muramoyl-L-alanyl-gamma-D-glutamyl-meso-2,6-diaminopimeloyl-D-alanyl-D-alanine + di-trans,octa-cis-undecaprenyl phosphate = di-trans,octa-cis-undecaprenyl diphospho-N-acetyl-alpha-D-muramoyl-L-alanyl-D-glutamyl-meso-2,6-diaminopimeloyl-D-alanyl-D-alanine + UMP. It functions in the pathway cell wall biogenesis; peptidoglycan biosynthesis. Catalyzes the initial step of the lipid cycle reactions in the biosynthesis of the cell wall peptidoglycan: transfers peptidoglycan precursor phospho-MurNAc-pentapeptide from UDP-MurNAc-pentapeptide onto the lipid carrier undecaprenyl phosphate, yielding undecaprenyl-pyrophosphoryl-MurNAc-pentapeptide, known as lipid I. This Chlamydia caviae (strain ATCC VR-813 / DSM 19441 / 03DC25 / GPIC) (Chlamydophila caviae) protein is Phospho-N-acetylmuramoyl-pentapeptide-transferase.